The sequence spans 72 residues: Large ribosomal subunit protein uL29 (72 aa).

It belongs to the universal ribosomal protein uL29 family.

In Chlamydia caviae (strain ATCC VR-813 / DSM 19441 / 03DC25 / GPIC) (Chlamydophila caviae), this protein is Large ribosomal subunit protein uL29.